Reading from the N-terminus, the 147-residue chain is MAGSKSPKGEFAGRKLLLKRRASRWHHYKYVNKALSLKLKADPLEGAPMGRGIVVEKVGLEAKQPNSAIRKCVRVQLIKNGRQVTAFAPGNHAINFIDEHDEVVIEGIGGPSGQAKGDIPGVRYKVVMVGKNSIRELVRGRQEKVKR.

It belongs to the universal ribosomal protein uS12 family. As to quaternary structure, part of the 30S ribosomal subunit.

Its function is as follows. With S4 and S5 plays an important role in translational accuracy. Located at the interface of the 30S and 50S subunits. The chain is Small ribosomal subunit protein uS12 from Methanococcus maripaludis (strain C7 / ATCC BAA-1331).